The sequence spans 161 residues: NADH-quinone oxidoreductase subunit I (161 aa).

4Fe-4S ferredoxin-type domains lie at 52-82 (LRRY…IESE) and 92-121 (SRYD…ETRV). The [4Fe-4S] cluster site is built by Cys62, Cys65, Cys68, Cys72, Cys101, Cys104, Cys107, and Cys111.

It belongs to the complex I 23 kDa subunit family. As to quaternary structure, NDH-1 is composed of 14 different subunits. Subunits NuoA, H, J, K, L, M, N constitute the membrane sector of the complex. [4Fe-4S] cluster is required as a cofactor.

Its subcellular location is the cell inner membrane. The catalysed reaction is a quinone + NADH + 5 H(+)(in) = a quinol + NAD(+) + 4 H(+)(out). In terms of biological role, NDH-1 shuttles electrons from NADH, via FMN and iron-sulfur (Fe-S) centers, to quinones in the respiratory chain. The immediate electron acceptor for the enzyme in this species is believed to be ubiquinone. Couples the redox reaction to proton translocation (for every two electrons transferred, four hydrogen ions are translocated across the cytoplasmic membrane), and thus conserves the redox energy in a proton gradient. The protein is NADH-quinone oxidoreductase subunit I of Azoarcus sp. (strain BH72).